Here is a 491-residue protein sequence, read N- to C-terminus: Glucose-6-phosphate 1-dehydrogenase (491 aa).

NADP(+) is bound by residues Arg50, 92 to 93 (DV), and Lys147. Positions 177, 181, 215, and 234 each coordinate substrate. The Proton acceptor role is filled by His239. Lys339 and Lys344 together coordinate substrate.

It belongs to the glucose-6-phosphate dehydrogenase family.

The catalysed reaction is D-glucose 6-phosphate + NADP(+) = 6-phospho-D-glucono-1,5-lactone + NADPH + H(+). It functions in the pathway carbohydrate degradation; pentose phosphate pathway; D-ribulose 5-phosphate from D-glucose 6-phosphate (oxidative stage): step 1/3. Its function is as follows. Catalyzes the oxidation of glucose 6-phosphate to 6-phosphogluconolactone. This Dickeya dadantii (strain 3937) (Erwinia chrysanthemi (strain 3937)) protein is Glucose-6-phosphate 1-dehydrogenase.